The primary structure comprises 465 residues: Phosphatidate cytidylyltransferase (465 aa).

Positions Met1 to Glu60 are disordered. Basic and acidic residues predominate over residues Ala10–Ser38. A compositionally biased stretch (acidic residues) spans Asp39–Asp53. The next 8 membrane-spanning stretches (helical) occupy residues Trp95–Ala117, Met121–Tyr143, Phe158–Val178, Phe187–Phe207, Gly214–Val234, Phe239–Ile259, Gly288–Tyr308, and Ile367–Phe387.

This sequence belongs to the CDS family.

It localises to the membrane. The catalysed reaction is a 1,2-diacyl-sn-glycero-3-phosphate + CTP + H(+) = a CDP-1,2-diacyl-sn-glycerol + diphosphate. It participates in phospholipid metabolism; CDP-diacylglycerol biosynthesis; CDP-diacylglycerol from sn-glycerol 3-phosphate: step 3/3. Its function is as follows. Provides CDP-diacylglycerol, an important precursor for the synthesis of phosphatidylinositol (PtdIns). This chain is Phosphatidate cytidylyltransferase (cdgs-1), found in Caenorhabditis elegans.